A 240-amino-acid polypeptide reads, in one-letter code: MIYSKVFLKLHWGFSVVKPSAAKAKSGFYLPPPTTLIGALSYGKFRGIDNTNLGKIYGSPAYNFRNVMATARLESEGAYTEDIVRNVISYFQRKDRRDNPRYIYGVIPTGKVYMPNGTLVVVYVTDSMSKEELEKLSWSITRIGGKECLVSVENVEIGEAKKVSGRMKTRYYFRDTVKVVGKKEFLEYVTFWEENGYIWGKEGGPIRYILPVATYPLASKEVEVEAKEAYEVGGEYVVFS.

This sequence belongs to the CRISPR-associated protein Cas5 family. Subtype I-A/Apern subfamily. In terms of assembly, part of the aCascade ribonucleoprotein complex.

Its function is as follows. CRISPR (clustered regularly interspaced short palindromic repeat) is an adaptive immune system that provides protection against mobile genetic elements (viruses, transposable elements and conjugative plasmids). CRISPR clusters contain spacers, sequences complementary to antecedent mobile elements, and target invading nucleic acids. CRISPR clusters are transcribed and processed into CRISPR RNA (crRNA). This chain is CRISPR-associated protein Cas5 3 (cas5c), found in Saccharolobus solfataricus (strain ATCC 35092 / DSM 1617 / JCM 11322 / P2) (Sulfolobus solfataricus).